The following is a 254-amino-acid chain: 3-dehydroquinate dehydratase (254 aa).

3-dehydroquinate-binding positions include 47 to 49 (EWR) and R83. H144 (proton donor/acceptor) is an active-site residue. The active-site Schiff-base intermediate with substrate is the K171. R214, S233, and Q237 together coordinate 3-dehydroquinate.

Belongs to the type-I 3-dehydroquinase family. As to quaternary structure, homodimer.

The enzyme catalyses 3-dehydroquinate = 3-dehydroshikimate + H2O. It participates in metabolic intermediate biosynthesis; chorismate biosynthesis; chorismate from D-erythrose 4-phosphate and phosphoenolpyruvate: step 3/7. Functionally, involved in the third step of the chorismate pathway, which leads to the biosynthesis of aromatic amino acids. Catalyzes the cis-dehydration of 3-dehydroquinate (DHQ) and introduces the first double bond of the aromatic ring to yield 3-dehydroshikimate. The protein is 3-dehydroquinate dehydratase of Clostridium botulinum (strain Eklund 17B / Type B).